The sequence spans 1159 residues: WASH complex subunit 5 (1159 aa).

This sequence belongs to the strumpellin family. Component of the WASH core complex also described as WASH regulatory complex (SHRC) composed of WASH (WASHC1, WASH2P or WASH3P), WASHC2 (WASHC2A or WASHC2C), WASHC3, WASHC4 and WASHC5. The WASH core complex associates via WASHC2 with the F-actin-capping protein dimer (formed by CAPZA1, CAPZA2 or CAPZA3 and CAPZB) in a transient or substoichiometric manner which was initially described as WASH complex. Interacts with VCP, PI4K2A.

It is found in the cytoplasm. Its subcellular location is the cytosol. It localises to the endoplasmic reticulum. The protein resides in the early endosome. Functionally, acts as a component of the WASH core complex that functions as a nucleation-promoting factor (NPF) at the surface of endosomes, where it recruits and activates the Arp2/3 complex to induce actin polymerization, playing a key role in the fission of tubules that serve as transport intermediates during endosome sorting. May be involved in axonal outgrowth. Involved in cellular localization of ADRB2. Involved in cellular trafficking of BLOC-1 complex cargos such as ATP7A and VAMP7. Involved in cytokinesis and following polar body extrusion during oocyte meiotic maturation. In Mus musculus (Mouse), this protein is WASH complex subunit 5.